A 442-amino-acid polypeptide reads, in one-letter code: Ribosomal protein uS12 methylthiotransferase RimO (442 aa).

Positions 9–119 (PRIGFVSLGC…VLSHVHQYVP (111 aa)) constitute an MTTase N-terminal domain. Positions 18, 54, 83, 151, 155, and 158 each coordinate [4Fe-4S] cluster. The Radical SAM core domain occupies 137 to 375 (LTPRHYAYLK…QLQQAISTQR (239 aa)). The region spanning 377-442 (QDKIGREVLV…DEYDLWGSRV (66 aa)) is the TRAM domain.

This sequence belongs to the methylthiotransferase family. RimO subfamily. [4Fe-4S] cluster is required as a cofactor.

It is found in the cytoplasm. The catalysed reaction is L-aspartate(89)-[ribosomal protein uS12]-hydrogen + (sulfur carrier)-SH + AH2 + 2 S-adenosyl-L-methionine = 3-methylsulfanyl-L-aspartate(89)-[ribosomal protein uS12]-hydrogen + (sulfur carrier)-H + 5'-deoxyadenosine + L-methionine + A + S-adenosyl-L-homocysteine + 2 H(+). Its function is as follows. Catalyzes the methylthiolation of an aspartic acid residue of ribosomal protein uS12. In Pectobacterium atrosepticum (strain SCRI 1043 / ATCC BAA-672) (Erwinia carotovora subsp. atroseptica), this protein is Ribosomal protein uS12 methylthiotransferase RimO.